Consider the following 961-residue polypeptide: Thrombospondin-4 (961 aa).

Positions 1–23 are cleaved as a signal peptide; sequence MLAPRGATFLLLHLALQPWLGAG. The Laminin G-like domain maps to 24–192; that stretch reads AQATPQVFDL…LEELKLVVRG (169 aa). The 40-residue stretch at 286–325 folds into the EGF-like 1 domain; it reads PVRRCDSNPCFRGVRCTDTRDGFQCGPCPEGYTGNGIVCS. Disulfide bonds link Cys-290-Cys-301, Cys-295-Cys-310, Cys-313-Cys-324, Cys-330-Cys-341, Cys-335-Cys-350, Cys-353-Cys-377, Cys-383-Cys-394, Cys-388-Cys-403, Cys-406-Cys-418, Cys-424-Cys-438, Cys-432-Cys-448, Cys-450-Cys-461, Cys-477-Cys-482, Cys-487-Cys-507, Cys-523-Cys-543, Cys-546-Cys-566, Cys-582-Cys-602, Cys-605-Cys-625, Cys-643-Cys-663, Cys-683-Cys-703, and Cys-719-Cys-940. In terms of domain architecture, EGF-like 2; calcium-binding spans 326-363; it reads DVDECRYHPCYPGVRCVNLAPGFRCDACPVGFTGPMMQ. Residues 379 to 419 enclose the EGF-like 3; calcium-binding domain; sequence DIDECRNGACVLNSICINTLGSYRCGPCKPGYIGDQMRGCK. Residues 420–462 form the EGF-like 4 domain; that stretch reads MERNCRDPELNPCSVNAQCIEERQGDVTCVCGVGWAGDGYICG. TSP type-3 repeat units follow at residues 463–495, 496–531, 532–554, 555–590, 591–613, 614–651, 652–691, and 692–727; these read KDVDIDSYPDEELPCSARNCKKDNCKYVPNSGQ, EDADRDGIGDACDDDADGDGILNEQDNCVLTHNVDQ, RNSDKDIFGDACDNCRNVLNNDQ, KDTDGDGKGDACDDDMDGDGIKNILDNCQKVPNSDQ, EDRDGDGVGDACDSCPEVSNPNQ, SDVDNDLVGDSCDTNQDSDGDGHQDSTDNCPTVINSAQ, LDTDKDGIGDECDDDDDNDGIPDLVPPGPDNCRLVPNPAQ, and EDSNSDGVGDICEADFDQDQVIDRIDVCPENAEVTL. Positions 562–564 match the Cell attachment site motif; sequence KGD. A disordered region spans residues 581-671; that stretch reads NCQKVPNSDQ…ECDDDDDNDG (91 aa). Asn-612 carries an N-linked (GlcNAc...) asparagine glycan. A compositionally biased stretch (polar residues) spans 640–652; sequence TDNCPTVINSAQL. Residues 660-671 show a composition bias toward acidic residues; that stretch reads GDECDDDDDNDG. Residues 731–945 enclose the TSP C-terminal domain; it reads RAYQTVVLDP…LKYRCNDTIP (215 aa). A glycan (N-linked (GlcNAc...) asparagine) is linked at Asn-941.

Belongs to the thrombospondin family. As to quaternary structure, homopentamer; disulfide-linked. Interacts with PTBP3. Interacts (via EGF-like 3; calcium-binding domain) with ATF6 and facilitates its processing, activation and nuclear translocation. Interacts with NOTCH1.

The protein resides in the endoplasmic reticulum. It is found in the sarcoplasmic reticulum. Its subcellular location is the secreted. It localises to the extracellular space. The protein localises to the extracellular matrix. Its function is as follows. Adhesive glycoprotein that mediates cell-to-cell and cell-to-matrix interactions and is involved in various processes including cellular proliferation, migration, adhesion and attachment, inflammatory response to CNS injury, regulation of vascular inflammation and adaptive responses of the heart to pressure overload and in myocardial function and remodeling. Binds to structural extracellular matrix (ECM) proteins and modulates the ECM in response to tissue damage, contributing to cardioprotective and adaptive ECM remodeling. Plays a role in ER stress response, via its interaction with the activating transcription factor 6 alpha (ATF6) which produces adaptive ER stress response factors and protects myocardium from pressure overload. May contribute to spinal presynaptic hypersensitivity and neuropathic pain states after peripheral nerve injury. May play a role in regulating protective astrogenesis from the subventricular zone (SVZ) niche after injury in a NOTCH1-dependent manner. The sequence is that of Thrombospondin-4 (THBS4) from Bos taurus (Bovine).